We begin with the raw amino-acid sequence, 255 residues long: 5'-nucleotidase SurE (255 aa).

Residues Asp-8, Asp-9, Ser-40, and Asn-93 each contribute to the a divalent metal cation site.

Belongs to the SurE nucleotidase family. The cofactor is a divalent metal cation.

Its subcellular location is the cytoplasm. It carries out the reaction a ribonucleoside 5'-phosphate + H2O = a ribonucleoside + phosphate. Its function is as follows. Nucleotidase that shows phosphatase activity on nucleoside 5'-monophosphates. The protein is 5'-nucleotidase SurE of Nitrobacter hamburgensis (strain DSM 10229 / NCIMB 13809 / X14).